The chain runs to 297 residues: Large ribosomal subunit protein uL18 (297 aa).

At G2 the chain carries N-acetylglycine. Residues K5 and K48 each carry the N6-acetyllysine modification. Residue S185 is modified to Phosphoserine. K220 bears the N6-acetyllysine; alternate mark. A Glycyl lysine isopeptide (Lys-Gly) (interchain with G-Cter in SUMO1); alternate cross-link involves residue K220. K220 participates in a covalent cross-link: Glycyl lysine isopeptide (Lys-Gly) (interchain with G-Cter in SUMO2); alternate. The residue at position 232 (T232) is a Phosphothreonine. Residues 253 to 297 (YEKKPKKEVKKKRWNRPKMSLAQKKDRVAQKKASFLRAQERAAES) form a disordered region. A compositionally biased stretch (basic residues) spans 258-268 (KKEVKKKRWNR). A Phosphoserine modification is found at S272.

The protein belongs to the universal ribosomal protein uL18 family. In terms of assembly, component of the large ribosomal subunit (LSU). Part of the 5S RNP complex, which is a LSU subcomplex composed of the 5S RNA, RPL5 and RPL11. Component of a hexameric 5S RNP precursor complex, composed of 5S RNA, RRS1, RPF2/BXDC1, RPL5, RPL11 and HEATR3; this complex acts as a precursor for ribosome assembly. Interacts with NVL in an ATP-dependent manner. Interacts with RRP1B. Interacts with IPO5, IPO7 and KPNB1; these interactions may be involved in RPL5 nuclear import for the assembly of ribosomal subunits. Interacts with RRP1B.

It localises to the cytoplasm. Its subcellular location is the nucleus. The protein resides in the nucleolus. Its function is as follows. Component of the ribosome, a large ribonucleoprotein complex responsible for the synthesis of proteins in the cell. The small ribosomal subunit (SSU) binds messenger RNAs (mRNAs) and translates the encoded message by selecting cognate aminoacyl-transfer RNA (tRNA) molecules. The large subunit (LSU) contains the ribosomal catalytic site termed the peptidyl transferase center (PTC), which catalyzes the formation of peptide bonds, thereby polymerizing the amino acids delivered by tRNAs into a polypeptide chain. The nascent polypeptides leave the ribosome through a tunnel in the LSU and interact with protein factors that function in enzymatic processing, targeting, and the membrane insertion of nascent chains at the exit of the ribosomal tunnel. As part of the 5S RNP/5S ribonucleoprotein particle it is an essential component of the LSU, required for its formation and the maturation of rRNAs. It also couples ribosome biogenesis to p53/TP53 activation. As part of the 5S RNP it accumulates in the nucleoplasm and inhibits MDM2, when ribosome biogenesis is perturbed, mediating the stabilization and the activation of TP53. The protein is Large ribosomal subunit protein uL18 (RPL5) of Macaca fascicularis (Crab-eating macaque).